Consider the following 313-residue polypeptide: Dimethyladenosine transferase (313 aa).

The segment at 1–21 is disordered; that stretch reads MPKVKSGAIGRRRGRQEQRRE. The S-adenosyl-L-methionine site is built by histidine 37, leucine 39, glycine 64, glutamate 85, aspartate 113, and asparagine 128.

Belongs to the class I-like SAM-binding methyltransferase superfamily. rRNA adenine N(6)-methyltransferase family. As to quaternary structure, part of the small subunit (SSU) processome, composed of more than 70 proteins and the RNA chaperone small nucleolar RNA (snoRNA) U3.

The protein resides in the nucleus. It localises to the nucleoplasm. The protein localises to the nucleolus. The enzyme catalyses adenosine(1779)/adenosine(1780) in 18S rRNA + 4 S-adenosyl-L-methionine = N(6)-dimethyladenosine(1779)/N(6)-dimethyladenosine(1780) in 18S rRNA + 4 S-adenosyl-L-homocysteine + 4 H(+). Specifically dimethylates two adjacent adenosines in the loop of a conserved hairpin near the 3'-end of 18S rRNA in the 40S particle. Involved in the pre-rRNA processing steps leading to small-subunit rRNA production independently of its RNA-modifying catalytic activity. Part of the small subunit (SSU) processome, first precursor of the small eukaryotic ribosomal subunit. During the assembly of the SSU processome in the nucleolus, many ribosome biogenesis factors, an RNA chaperone and ribosomal proteins associate with the nascent pre-rRNA and work in concert to generate RNA folding, modifications, rearrangements and cleavage as well as targeted degradation of pre-ribosomal RNA by the RNA exosome. In Homo sapiens (Human), this protein is Dimethyladenosine transferase.